The sequence spans 139 residues: Transcription antitermination protein NusB (139 aa).

Belongs to the NusB family.

Its function is as follows. Involved in transcription antitermination. Required for transcription of ribosomal RNA (rRNA) genes. Binds specifically to the boxA antiterminator sequence of the ribosomal RNA (rrn) operons. The sequence is that of Transcription antitermination protein NusB from Enterobacter sp. (strain 638).